Here is a 95-residue protein sequence, read N- to C-terminus: Aspartyl/glutamyl-tRNA(Asn/Gln) amidotransferase subunit C (95 aa).

The protein belongs to the GatC family. In terms of assembly, heterotrimer of A, B and C subunits.

It catalyses the reaction L-glutamyl-tRNA(Gln) + L-glutamine + ATP + H2O = L-glutaminyl-tRNA(Gln) + L-glutamate + ADP + phosphate + H(+). The enzyme catalyses L-aspartyl-tRNA(Asn) + L-glutamine + ATP + H2O = L-asparaginyl-tRNA(Asn) + L-glutamate + ADP + phosphate + 2 H(+). In terms of biological role, allows the formation of correctly charged Asn-tRNA(Asn) or Gln-tRNA(Gln) through the transamidation of misacylated Asp-tRNA(Asn) or Glu-tRNA(Gln) in organisms which lack either or both of asparaginyl-tRNA or glutaminyl-tRNA synthetases. The reaction takes place in the presence of glutamine and ATP through an activated phospho-Asp-tRNA(Asn) or phospho-Glu-tRNA(Gln). This Cereibacter sphaeroides (strain ATCC 17023 / DSM 158 / JCM 6121 / CCUG 31486 / LMG 2827 / NBRC 12203 / NCIMB 8253 / ATH 2.4.1.) (Rhodobacter sphaeroides) protein is Aspartyl/glutamyl-tRNA(Asn/Gln) amidotransferase subunit C.